A 267-amino-acid chain; its full sequence is Small ribosomal subunit protein uS3 (267 aa).

Residues 43 to 111 (IRKEMSKDLE…QVQLNIFEVK (69 aa)) form the KH type-2 domain. A disordered region spans residues 216–267 (FEEQQAQQNNRPGRRGGDRRPRRGNRSAAPQAAEAPKAEAPAEAAPAAETKE). Positions 241-267 (RSAAPQAAEAPKAEAPAEAAPAAETKE) are enriched in low complexity.

This sequence belongs to the universal ribosomal protein uS3 family. As to quaternary structure, part of the 30S ribosomal subunit. Forms a tight complex with proteins S10 and S14.

Binds the lower part of the 30S subunit head. Binds mRNA in the 70S ribosome, positioning it for translation. This chain is Small ribosomal subunit protein uS3, found in Bifidobacterium longum (strain DJO10A).